Here is a 90-residue protein sequence, read N- to C-terminus: DNA-binding protein HU (90 aa).

Position 4 is a phosphothreonine (T4). Positions 56–90 (AARKGRNPQTGEEMEIPASKVPAFKPGKALKDAVK) are disordered.

This sequence belongs to the bacterial histone-like protein family. As to quaternary structure, homodimer.

Its function is as follows. Histone-like DNA-binding protein which is capable of wrapping DNA to stabilize it, and thus to prevent its denaturation under extreme environmental conditions. In Geobacillus stearothermophilus (Bacillus stearothermophilus), this protein is DNA-binding protein HU (hup).